The primary structure comprises 116 residues: UPF0342 protein CTC_01059 (116 aa).

It belongs to the UPF0342 family.

The sequence is that of UPF0342 protein CTC_01059 from Clostridium tetani (strain Massachusetts / E88).